Reading from the N-terminus, the 811-residue chain is Elongation factor G, mitochondrial (811 aa).

Residues 1-64 (MSAIARAAAR…FQQSFQRRWA (64 aa)) constitute a mitochondrion transit peptide. Residues 96 to 394 (RRQRNVGISA…GVCAYLPNPS (299 aa)) form the tr-type G domain. GTP contacts are provided by residues 105 to 112 (AHIDSGKT), 192 to 196 (DTPGH), and 246 to 249 (NKMD).

This sequence belongs to the TRAFAC class translation factor GTPase superfamily. Classic translation factor GTPase family. EF-G/EF-2 subfamily.

The protein localises to the mitochondrion. It participates in protein biosynthesis; polypeptide chain elongation. Mitochondrial GTPase that catalyzes the GTP-dependent ribosomal translocation step during translation elongation. During this step, the ribosome changes from the pre-translocational (PRE) to the post-translocational (POST) state as the newly formed A-site-bound peptidyl-tRNA and P-site-bound deacylated tRNA move to the P and E sites, respectively. Catalyzes the coordinated movement of the two tRNA molecules, the mRNA and conformational changes in the ribosome. This Cryptococcus neoformans var. neoformans serotype D (strain B-3501A) (Filobasidiella neoformans) protein is Elongation factor G, mitochondrial.